The following is a 264-amino-acid chain: PDZ domain-containing protein 9 (264 aa).

The PDZ domain occupies 22-109; sequence VHNLSKTQQT…GTVLQIKVYR (88 aa).

This Macaca fascicularis (Crab-eating macaque) protein is PDZ domain-containing protein 9 (PDZD9).